The chain runs to 62 residues: UPF0434 protein FTM_0733 (62 aa).

This sequence belongs to the UPF0434 family.

This is UPF0434 protein FTM_0733 from Francisella tularensis subsp. mediasiatica (strain FSC147).